A 318-amino-acid polypeptide reads, in one-letter code: Methionyl-tRNA formyltransferase (318 aa).

112 to 115 is a binding site for (6S)-5,6,7,8-tetrahydrofolate; it reads SILP.

Belongs to the Fmt family.

It catalyses the reaction L-methionyl-tRNA(fMet) + (6R)-10-formyltetrahydrofolate = N-formyl-L-methionyl-tRNA(fMet) + (6S)-5,6,7,8-tetrahydrofolate + H(+). Its function is as follows. Attaches a formyl group to the free amino group of methionyl-tRNA(fMet). The formyl group appears to play a dual role in the initiator identity of N-formylmethionyl-tRNA by promoting its recognition by IF2 and preventing the misappropriation of this tRNA by the elongation apparatus. The chain is Methionyl-tRNA formyltransferase from Shewanella sp. (strain MR-7).